Here is a 170-residue protein sequence, read N- to C-terminus: Transcription factor E (170 aa).

Residues methionine 1–arginine 93 form the HTH TFE/IIEalpha-type domain.

It belongs to the TFE family. In terms of assembly, monomer. Interaction with RNA polymerase subunits RpoF and RpoE is necessary for Tfe stimulatory transcription activity. Able to interact with Tbp and RNA polymerase in the absence of DNA promoter. Interacts both with the preinitiation and elongation complexes.

Functionally, transcription factor that plays a role in the activation of archaeal genes transcribed by RNA polymerase. Facilitates transcription initiation by enhancing TATA-box recognition by TATA-box-binding protein (Tbp), and transcription factor B (Tfb) and RNA polymerase recruitment. Not absolutely required for transcription in vitro, but particularly important in cases where Tbp or Tfb function is not optimal. It dynamically alters the nucleic acid-binding properties of RNA polymerases by stabilizing the initiation complex and destabilizing elongation complexes. Seems to translocate with the RNA polymerase following initiation and acts by binding to the non template strand of the transcription bubble in elongation complexes. This chain is Transcription factor E, found in Pyrobaculum islandicum (strain DSM 4184 / JCM 9189 / GEO3).